Consider the following 191-residue polypeptide: Cytochrome c biogenesis ATP-binding export protein CcmA (191 aa).

The 184-residue stretch at Leu-6–Phe-189 folds into the ABC transporter domain. An ATP-binding site is contributed by Gly-38–Ser-45.

Belongs to the ABC transporter superfamily. CcmA exporter (TC 3.A.1.107) family. In terms of assembly, the complex is composed of two ATP-binding proteins (CcmA) and two transmembrane proteins (CcmB).

It localises to the cell inner membrane. It catalyses the reaction heme b(in) + ATP + H2O = heme b(out) + ADP + phosphate + H(+). In terms of biological role, part of the ABC transporter complex CcmAB involved in the biogenesis of c-type cytochromes; once thought to export heme, this seems not to be the case, but its exact role is uncertain. Responsible for energy coupling to the transport system. This is Cytochrome c biogenesis ATP-binding export protein CcmA from Novosphingobium aromaticivorans (strain ATCC 700278 / DSM 12444 / CCUG 56034 / CIP 105152 / NBRC 16084 / F199).